The following is a 238-amino-acid chain: Fatty acid metabolism regulator protein (238 aa).

Residues 6 to 74 (QSPAGFAEEY…HGKPTKVNNF (69 aa)) form the HTH gntR-type domain. Residues 34-53 (ERELSELIGVTRTTLREVLQ) constitute a DNA-binding region (H-T-H motif).

As to quaternary structure, homodimer.

The protein resides in the cytoplasm. Multifunctional regulator of fatty acid metabolism. In Erwinia tasmaniensis (strain DSM 17950 / CFBP 7177 / CIP 109463 / NCPPB 4357 / Et1/99), this protein is Fatty acid metabolism regulator protein.